A 512-amino-acid chain; its full sequence is Ribose import ATP-binding protein RbsA 1 (512 aa).

2 consecutive ABC transporter domains span residues 8–244 (FRME…IGRE) and 257–502 (PEEK…LNIG). 40 to 47 (GENGAGKS) is an ATP binding site.

It belongs to the ABC transporter superfamily. Ribose importer (TC 3.A.1.2.1) family. The complex is composed of an ATP-binding protein (RbsA), two transmembrane proteins (RbsC) and a solute-binding protein (RbsB).

It localises to the cell inner membrane. The enzyme catalyses D-ribose(out) + ATP + H2O = D-ribose(in) + ADP + phosphate + H(+). Part of the ABC transporter complex RbsABC involved in ribose import. Responsible for energy coupling to the transport system. The polypeptide is Ribose import ATP-binding protein RbsA 1 (Rhizobium etli (strain ATCC 51251 / DSM 11541 / JCM 21823 / NBRC 15573 / CFN 42)).